A 417-amino-acid chain; its full sequence is NADH-quinone oxidoreductase subunit D (417 aa).

The protein belongs to the complex I 49 kDa subunit family. In terms of assembly, NDH-1 is composed of 14 different subunits. Subunits NuoB, C, D, E, F, and G constitute the peripheral sector of the complex.

Its subcellular location is the cell inner membrane. It carries out the reaction a quinone + NADH + 5 H(+)(in) = a quinol + NAD(+) + 4 H(+)(out). NDH-1 shuttles electrons from NADH, via FMN and iron-sulfur (Fe-S) centers, to quinones in the respiratory chain. The immediate electron acceptor for the enzyme in this species is believed to be ubiquinone. Couples the redox reaction to proton translocation (for every two electrons transferred, four hydrogen ions are translocated across the cytoplasmic membrane), and thus conserves the redox energy in a proton gradient. This Burkholderia ambifaria (strain MC40-6) protein is NADH-quinone oxidoreductase subunit D.